The sequence spans 279 residues: Movement protein (279 aa).

Positions 246-279 (SESEELNVESPPAAIGSSSASRSEAFRPQVVNGL) are disordered. Residues 254–268 (ESPPAAIGSSSASRS) show a composition bias toward low complexity.

Belongs to the cucumovirus movement protein family.

It is found in the host cell junction. Its subcellular location is the host plasmodesma. In terms of biological role, transports viral genome to neighboring plant cells directly through plasmosdesmata, without any budding. The movement protein allows efficient cell to cell propagation, by bypassing the host cell wall barrier. Acts by forming a tubular structure at the host plasmodesmata, enlarging it enough to allow free passage of virion capsids. The polypeptide is Movement protein (Cucumber mosaic virus (strain N) (CMV)).